The sequence spans 209 residues: Eukaryotic translation initiation factor 4E (209 aa).

This sequence belongs to the eukaryotic initiation factor 4E family. In terms of assembly, eIF4F is a multi-subunit complex, the composition of which varies with external and internal environmental conditions. It is composed of at least eIF4A, eIF4E and eIF4G. eIF4E is also known to interact with other partners.

Recognizes and binds the 7-methylguanosine-containing mRNA cap during an early step in the initiation of protein synthesis and facilitates ribosome binding by inducing the unwinding of the mRNAs secondary structures. The protein is Eukaryotic translation initiation factor 4E (TIF45) of Candida glabrata (strain ATCC 2001 / BCRC 20586 / JCM 3761 / NBRC 0622 / NRRL Y-65 / CBS 138) (Yeast).